Consider the following 1165-residue polypeptide: DNA-directed RNA polymerase subunit beta (1165 aa).

The protein belongs to the RNA polymerase beta chain family. As to quaternary structure, the RNAP catalytic core consists of 2 alpha, 1 beta, 1 beta' and 1 omega subunit. When a sigma factor is associated with the core the holoenzyme is formed, which can initiate transcription.

It catalyses the reaction RNA(n) + a ribonucleoside 5'-triphosphate = RNA(n+1) + diphosphate. Functionally, DNA-dependent RNA polymerase catalyzes the transcription of DNA into RNA using the four ribonucleoside triphosphates as substrates. The protein is DNA-directed RNA polymerase subunit beta of Leifsonia xyli subsp. xyli (strain CTCB07).